A 1048-amino-acid polypeptide reads, in one-letter code: Probable beta-glucosidase E (1048 aa).

A disordered region spans residues 1–54; that stretch reads MPPPPFRDAPSSAKSSQRYTPLHESIPEELNDKQYSSDADSLPLSDPSDGEDDS. Over 1 to 150 the chain is Cytoplasmic; it reads MPPPPFRDAP…WRTVYYSKYW (150 aa). Over residues 36–47 the composition is skewed to low complexity; that stretch reads SSDADSLPLSDP. Residues 151-171 form a helical; Signal-anchor for type II membrane protein membrane-spanning segment; sequence WRALIGVVVVLVLLVLVFLGL. Residues 172–1048 lie on the Extracellular side of the membrane; sequence ARSKQVGDEL…SRDLPLHGKY (877 aa). Residues asparagine 216, asparagine 224, and asparagine 410 are each glycosylated (N-linked (GlcNAc...) asparagine). Aspartate 438 is an active-site residue. 5 N-linked (GlcNAc...) asparagine glycosylation sites follow: asparagine 481, asparagine 520, asparagine 578, asparagine 895, and asparagine 991. The disordered stretch occupies residues 508 to 527; the sequence is WERPPPDGEGGPNFSSWTDD.

This sequence belongs to the glycosyl hydrolase 3 family.

It is found in the cell membrane. It catalyses the reaction Hydrolysis of terminal, non-reducing beta-D-glucosyl residues with release of beta-D-glucose.. The protein operates within glycan metabolism; cellulose degradation. In terms of biological role, beta-glucosidases are one of a number of cellulolytic enzymes involved in the degradation of cellulosic biomass. Catalyzes the last step releasing glucose from the inhibitory cellobiose. In Aspergillus oryzae (strain ATCC 42149 / RIB 40) (Yellow koji mold), this protein is Probable beta-glucosidase E (bglE).